A 1070-amino-acid chain; its full sequence is Potassium/chloride cotransporter 3 (1070 aa).

A run of 15 helical transmembrane segments spans residues 92-112, 114-134, 142-162, 174-194, 196-216, 228-248, 251-271, 400-420, 433-453, 473-493, 534-554, 557-577, 600-620, 791-811, and 827-847; these read GVML…TMFI, LFWV…AICC, ISLS…YFII, VGIL…VGGV, VILM…LHDT, LYGT…VKFV, LAPV…GGGI, FFML…GTNM, VGTI…AILF, TMVV…GAFL, PFLG…LGAV, IAEV…LIAV, LLGA…LACI, LVLF…LIVT, and FIDI…AYLL.

As to expression, expressed in the amphid sheath glia and the cephalic sheath glia. Also expressed in the inner labial and outer labial sheath and socket glia and as well as phasmid sheath glia.

It localises to the cell membrane. In terms of biological role, probable potassium/chloride cotransporter that functions in the amphid sheath glial cells to regulate thermotaxis behavior. By maintaining chloride homeostasis, negatively regulates guanylate cyclase gcy-8 in the thermosensory AFD neurons and thereby controls the microvilli receptive ending morphology of the AFD neurons and thermotaxis. Modulates the temperature-evoked neuronal activity of the AFD neurons such as calcium responses to temperature gradients. Might also play a role in the chemotaxis behavior mediated by the sensory neurons AWA and AWC. The sequence is that of Potassium/chloride cotransporter 3 (kcc-3) from Caenorhabditis elegans.